A 571-amino-acid polypeptide reads, in one-letter code: Coiled-coil domain-containing protein 22 homolog (571 aa).

Coiled coils occupy residues 406-434 (MMDLQTKSAMHARLQKELEKLNRTVSRTA) and 509-571 (CAEL…AHLR).

This sequence belongs to the CCDC22 family.

This Culex quinquefasciatus (Southern house mosquito) protein is Coiled-coil domain-containing protein 22 homolog.